A 195-amino-acid polypeptide reads, in one-letter code: MSFAEKITGLLARPNQQDPVGPEQPWYLKYGSRLLGIVAAFFAILFGLWNVISILTLNVGCLVAGIIQMVAGFVVMLLEAPCCFVCIEKVNDIADKVDSKPMYFRAGLYCAMAVPPIFMCFGLASLFGSGLIFATGVIYGMMALGKKASAEDMRAAAQQSYAGNATPQTTNDRAGIVNNAQPFSFTGAVGTDSNV.

A run of 3 helical transmembrane segments spans residues 34–54 (LLGIVAAFFAILFGLWNVISI), 66–88 (IIQMVAGFVVMLLEAPCCFVCIE), and 117–137 (IFMCFGLASLFGSGLIFATGV).

Belongs to the calcium channel flower family. As to quaternary structure, homomultimer. Associates with the dally/ magu complex.

It is found in the cell membrane. Its subcellular location is the cytoplasmic vesicle. The protein localises to the secretory vesicle. It localises to the synaptic vesicle membrane. The protein resides in the presynaptic cell membrane. It is found in the endosome. Its activity is regulated as follows. Channel activity is inhibited by La(3+), which reduces Ca(2+) influx and thus inhibits it's function in promoting activity-dependent bulk endocytosis (ADBE) in response to high stimuli. Its function is as follows. Transmembrane protein which mediates synaptic endocytosis, fitness-based cell culling, neuronal culling, morphogen gradient scaling, and calcium transport. Regulates synaptic endocytosis and hence couples exo- with endocytosis. Controls two major modes of synaptic vesicle (SV) endocytosis in the synaptic boutons of neuromuscular junctions (NMJs); Ca(2+) channel-independent Clathrin-mediated endocytosis (CME) in response to mild stimulation, and Ca(2+) channel-dependent activity-dependent bulk endocytosis (ADBE) in response to strong stimulation. Functions in ADBE and subsequent SV reformation from bulk endosomes by initiating Ca(2+) channel-dependent phosphatidylinositol 4,5-bisphosphate (PtdIns(4,5)P2) compartmentalization in synaptic boutons. There it acts at the periactive zone to provide the low Ca(2+) levels required to initiate Calcineurin activation and upregulate PtdIns(4,5)P2. Conversely PtdIns(4,5)P2 enhances fwe Ca(2+) channel-activity, establishing a positive feedback loop that induces PtdIns(4,5)P2 microdomain at the periactive zone. These microdomains trigger bulk membrane invagination (i.e. ADBE) by triggering actin polymerization while also promoting localization of fwe to bulk endosomes, thereby removing the ADBE trigger to reduce endocytosis and prevent excess membrane uptake. PtdIns(4,5)P2 then promotes SV reformation from the bulk endosomes, to coordinate ADBE and subsequent SV reformation. Different combinations of the flower isoforms at the cell membrane are also required for the identification and elimination of suboptimal or supernumerary cells during development, regeneration, and adulthood. Required for the recognition and elimination of unfit cells in the developing wing during cell competition. In the developing pupal retina, mediates the elimination of unwanted postmitotic neurons, including supernumerary photoreceptor neurons that form at the periphery of the retina and are contained within incomplete ommatidia units. Also required for efficient elimination and replacement of old neurons by newly generated neurons during regeneration in the adult brain following mechanical injury. Downstream of the flower fitness fingerprints, cells identified as unwanted or unfit are eliminated via apoptosis through the expression of ahuizotl (azot). However, the cells marked for elimination by the flower isoforms only undergo apoptosis if additional thresholds are met; (1) their neighboring fit/healthy cells express different levels of the fwe isoforms, and (2) the levels of the protective signal SPARC expressed by the loser or unwanted cells are unable to inhibit caspase activation. These additional thresholds for flower-mediated apoptosis, allows useful cells to recover from transient and limited stress before they are unnecessarily eliminated. Functions with dally and magu in a mechanism of scaling, which utilises apoptosis to ensure that the dpp morphogen gradient, which mediates organ growth, remains proportional to the size of the growing wing. In this mechanism, fwe represses dally- and Magu-dependent activity in expanding the gradient, and dally/Magu inhibits fwe-dependent apoptosis to keep cell death rate low. When the levels of these different proteins are optimally regulated the gradient correctly scales with organ growth but when this fails, fwe-mediated apoptosis is activated to trim the developing tissue to match the correct size of the gradient. The polypeptide is Calcium channel flower (Drosophila ananassae (Fruit fly)).